The sequence spans 509 residues: Cytochrome P450 4A10 (509 aa).

The next 2 helical transmembrane spans lie at 11–31 and 121–141; these read FTGSISGFLQVASVLGLLLLL and LLAPWIGYGLLLLNGQPWFQH. Residue Glu-320 coordinates heme. Ser-439 carries the phosphoserine modification. A heme-binding site is contributed by Cys-456.

It belongs to the cytochrome P450 family. The cofactor is heme. Expressed in liver (at protein level) and kidney (at protein level).

It is found in the endoplasmic reticulum membrane. The protein resides in the microsome membrane. The enzyme catalyses an omega-methyl-long-chain fatty acid + reduced [NADPH--hemoprotein reductase] + O2 = an omega-hydroxy-long-chain fatty acid + oxidized [NADPH--hemoprotein reductase] + H2O + H(+). It catalyses the reaction dodecanoate + reduced [NADPH--hemoprotein reductase] + O2 = 12-hydroxydodecanoate + oxidized [NADPH--hemoprotein reductase] + H2O + H(+). It carries out the reaction dodecanoate + reduced [NADPH--hemoprotein reductase] + O2 = 11-hydroxydodecanoate + oxidized [NADPH--hemoprotein reductase] + H2O + H(+). The catalysed reaction is tetradecanoate + reduced [NADPH--hemoprotein reductase] + O2 = 14-hydroxytetradecanoate + oxidized [NADPH--hemoprotein reductase] + H2O + H(+). The enzyme catalyses hexadecanoate + reduced [NADPH--hemoprotein reductase] + O2 = 16-hydroxyhexadecanoate + oxidized [NADPH--hemoprotein reductase] + H2O + H(+). It catalyses the reaction (9Z)-octadecenoate + reduced [NADPH--hemoprotein reductase] + O2 = 18-hydroxy-(9Z)-octadecenoate + oxidized [NADPH--hemoprotein reductase] + H2O + H(+). It carries out the reaction (9Z,12Z)-octadecadienoate + reduced [NADPH--hemoprotein reductase] + O2 = 18-hydroxy-(9Z,12Z)-octadecadienoate + oxidized [NADPH--hemoprotein reductase] + H2O + H(+). The catalysed reaction is (9Z,12Z)-octadecadienoate + reduced [NADPH--hemoprotein reductase] + O2 = 17-hydroxy-(9Z,12Z)-octadecadienoate + oxidized [NADPH--hemoprotein reductase] + H2O + H(+). The enzyme catalyses (5Z,8Z,11Z,14Z)-eicosatetraenoate + reduced [NADPH--hemoprotein reductase] + O2 = 20-hydroxy-(5Z,8Z,11Z,14Z)-eicosatetraenoate + oxidized [NADPH--hemoprotein reductase] + H2O + H(+). It catalyses the reaction 8,9-epoxy-(5Z,11Z,14Z)-eicosatrienoate + reduced [NADPH--hemoprotein reductase] + O2 = 20-hydroxy-8,9-epoxy-(5Z,11Z,14Z)-eicosatrienoate + oxidized [NADPH--hemoprotein reductase] + H2O + H(+). In terms of biological role, a cytochrome P450 monooxygenase involved in the metabolism of fatty acids. Catalyzes predominantly the oxidation of the terminal carbon (omega-oxidation) of long-chain fatty acids. Acts as a major omega-hydroxylase for dodecanoic (lauric) acid in liver. In kidney, may play an important role in omega-hydroxylation of (5Z,8Z,11Z,14Z)-eicosatetraenoic acid (arachidonate) to 20-hydroxyeicosatetraenoic acid (20-HETE), a signaling molecule acting both as vasoconstrictive and natriuretic with overall effect on arterial blood pressure. Also participates in the formation of anti-inflammatory hydroxyepoxyeicosatrienoic acids (HEETs) in kidney by converting 8,9-epoxyeicosatrienoic acid (EET) to 20,8,9-HEET, an activator of PPARA. Displays substantially lower fatty acid omega-1 hydroxylase activity. Mechanistically, uses molecular oxygen inserting one oxygen atom into a substrate, and reducing the second into a water molecule, with two electrons provided by NADPH via cytochrome P450 reductase (CPR; NADPH-ferrihemoprotein reductase). This Rattus norvegicus (Rat) protein is Cytochrome P450 4A10 (Cyp4a10).